The primary structure comprises 278 residues: Small ribosomal subunit protein uS2 (278 aa).

2 disordered regions span residues 216–235 (EAAA…TQWD) and 250–278 (NFAA…EWTN). The span at 256–278 (ADGNWGATTGGDWAAAGGEEWTN) shows a compositional bias: low complexity.

Belongs to the universal ribosomal protein uS2 family. Component of the small ribosomal subunit. Mature ribosomes consist of a small (40S) and a large (60S) subunit. The 40S subunit contains about 33 different proteins and 1 molecule of RNA (18S). The 60S subunit contains about 49 different proteins and 3 molecules of RNA (25S, 5.8S and 5S). Interacts with ribosomal protein S21.

It is found in the cytoplasm. In terms of biological role, required for the assembly and/or stability of the 40S ribosomal subunit. Required for the processing of the 20S rRNA-precursor to mature 18S rRNA in a late step of the maturation of 40S ribosomal subunits. The polypeptide is Small ribosomal subunit protein uS2 (Monosiga brevicollis (Choanoflagellate)).